A 349-amino-acid chain; its full sequence is Bifunctional protein FolKE (349 aa).

The interval 1-226 (MQTTYLSMGS…LFEIDSSKND (226 aa)) is 2-amino-4-hydroxy-6-hydroxymethyldihydropteridine pyrophosphokinase. The interval 226–349 (DSIVLIKDIP…KRMEFLESLL (124 aa)) is GTP cyclohydrolase 1.

This sequence in the N-terminal section; belongs to the HPPK family. In the C-terminal section; belongs to the GTP cyclohydrolase I family. In terms of assembly, homomer.

It catalyses the reaction 6-hydroxymethyl-7,8-dihydropterin + ATP = (7,8-dihydropterin-6-yl)methyl diphosphate + AMP + H(+). The catalysed reaction is GTP + H2O = 7,8-dihydroneopterin 3'-triphosphate + formate + H(+). It participates in cofactor biosynthesis; 7,8-dihydroneopterin triphosphate biosynthesis; 7,8-dihydroneopterin triphosphate from GTP: step 1/1. Its pathway is cofactor biosynthesis; tetrahydrofolate biosynthesis; 2-amino-4-hydroxy-6-hydroxymethyl-7,8-dihydropteridine diphosphate from 7,8-dihydroneopterin triphosphate: step 4/4. The polypeptide is Bifunctional protein FolKE (folKE) (Lactococcus lactis subsp. cremoris (strain MG1363)).